The chain runs to 234 residues: 1-(5-phosphoribosyl)-5-[(5-phosphoribosylamino)methylideneamino] imidazole-4-carboxamide isomerase (234 aa).

The active-site Proton acceptor is D8. The active-site Proton donor is D128.

The protein belongs to the HisA/HisF family.

The protein resides in the cytoplasm. The catalysed reaction is 1-(5-phospho-beta-D-ribosyl)-5-[(5-phospho-beta-D-ribosylamino)methylideneamino]imidazole-4-carboxamide = 5-[(5-phospho-1-deoxy-D-ribulos-1-ylimino)methylamino]-1-(5-phospho-beta-D-ribosyl)imidazole-4-carboxamide. It participates in amino-acid biosynthesis; L-histidine biosynthesis; L-histidine from 5-phospho-alpha-D-ribose 1-diphosphate: step 4/9. The protein is 1-(5-phosphoribosyl)-5-[(5-phosphoribosylamino)methylideneamino] imidazole-4-carboxamide isomerase of Cenarchaeum symbiosum (strain A).